The primary structure comprises 125 residues: uncharacterized protein (125 aa).

This is an uncharacterized protein from Acanthamoeba polyphaga (Amoeba).